We begin with the raw amino-acid sequence, 904 residues long: Protein translocase subunit SecA (904 aa).

ATP contacts are provided by residues Q89, 107-111 (GEGKT), and D496. The disordered stretch occupies residues 870-904 (GGFQELSSGTPSPTVTVTTSSGGGTERKTSRRRKR). Residues 876 to 889 (SSGTPSPTVTVTTS) show a composition bias toward low complexity.

This sequence belongs to the SecA family. In terms of assembly, monomer and homodimer. Part of the essential Sec protein translocation apparatus which comprises SecA, SecYEG and auxiliary proteins SecDF. Other proteins may also be involved.

Its subcellular location is the cell inner membrane. It is found in the cytoplasm. The catalysed reaction is ATP + H2O + cellular proteinSide 1 = ADP + phosphate + cellular proteinSide 2.. Functionally, part of the Sec protein translocase complex. Interacts with the SecYEG preprotein conducting channel. Has a central role in coupling the hydrolysis of ATP to the transfer of proteins into and across the cell membrane, serving as an ATP-driven molecular motor driving the stepwise translocation of polypeptide chains across the membrane. The sequence is that of Protein translocase subunit SecA from Leptospira borgpetersenii serovar Hardjo-bovis (strain JB197).